The primary structure comprises 229 residues: Homeobox-leucine zipper protein HOX3 (229 aa).

Residues methionine 1–leucine 82 are disordered. The segment covering glycine 52–glutamate 68 has biased composition (acidic residues). A DNA-binding region (homeobox) is located at residues histidine 75–glutamine 134. Residues lysine 133 to histidine 177 are leucine-zipper. Residues alanine 198–phenylalanine 229 form a disordered region.

The protein belongs to the HD-ZIP homeobox family. Class II subfamily. In terms of assembly, homodimer. May form a heterodimer with HOX1, HOX2 or HOX7. As to expression, expressed in seedlings, roots, leaves, nodes, internodes, flowers and embryo.

The protein localises to the nucleus. Functionally, probable transcription repressor that binds to the DNA sequence 5'-CAAT[GC]ATTG-3'. The protein is Homeobox-leucine zipper protein HOX3 (HOX3) of Oryza sativa subsp. indica (Rice).